A 341-amino-acid polypeptide reads, in one-letter code: Small ribosomal subunit biogenesis GTPase RsgA (341 aa).

A CP-type G domain is found at 112–268 (RQQLIAANLD…LIDTPGMREL (157 aa)). GTP is bound by residues 157-160 (TKVD) and 210-218 (GSSGAGKST). Zn(2+)-binding residues include cysteine 290, cysteine 295, histidine 297, and cysteine 303.

It belongs to the TRAFAC class YlqF/YawG GTPase family. RsgA subfamily. In terms of assembly, monomer. Associates with 30S ribosomal subunit, binds 16S rRNA. Requires Zn(2+) as cofactor.

The protein localises to the cytoplasm. Its function is as follows. One of several proteins that assist in the late maturation steps of the functional core of the 30S ribosomal subunit. Helps release RbfA from mature subunits. May play a role in the assembly of ribosomal proteins into the subunit. Circularly permuted GTPase that catalyzes slow GTP hydrolysis, GTPase activity is stimulated by the 30S ribosomal subunit. This Xylella fastidiosa (strain Temecula1 / ATCC 700964) protein is Small ribosomal subunit biogenesis GTPase RsgA.